Consider the following 345-residue polypeptide: Phenylalanine--tRNA ligase alpha subunit (345 aa).

Glu-259 lines the Mg(2+) pocket.

This sequence belongs to the class-II aminoacyl-tRNA synthetase family. Phe-tRNA synthetase alpha subunit type 1 subfamily. As to quaternary structure, tetramer of two alpha and two beta subunits. Mg(2+) is required as a cofactor.

The protein localises to the cytoplasm. It carries out the reaction tRNA(Phe) + L-phenylalanine + ATP = L-phenylalanyl-tRNA(Phe) + AMP + diphosphate + H(+). The protein is Phenylalanine--tRNA ligase alpha subunit of Nitrosomonas europaea (strain ATCC 19718 / CIP 103999 / KCTC 2705 / NBRC 14298).